We begin with the raw amino-acid sequence, 425 residues long: Glutamyl-tRNA reductase (425 aa).

Substrate-binding positions include 49 to 52, S107, 112 to 114, and Q118; these read TCNR and EPQ. C50 functions as the Nucleophile in the catalytic mechanism. 187–192 is a binding site for NADP(+); sequence GAGETI.

Belongs to the glutamyl-tRNA reductase family. As to quaternary structure, homodimer.

It carries out the reaction (S)-4-amino-5-oxopentanoate + tRNA(Glu) + NADP(+) = L-glutamyl-tRNA(Glu) + NADPH + H(+). It participates in porphyrin-containing compound metabolism; protoporphyrin-IX biosynthesis; 5-aminolevulinate from L-glutamyl-tRNA(Glu): step 1/2. Functionally, catalyzes the NADPH-dependent reduction of glutamyl-tRNA(Glu) to glutamate 1-semialdehyde (GSA). This is Glutamyl-tRNA reductase from Pseudomonas entomophila (strain L48).